Reading from the N-terminus, the 475-residue chain is Mitochondrial adenyl nucleotide antiporter SLC25A24 (475 aa).

A regulatory N-terminal domain region spans residues 1–173; that stretch reads MLRWLRGFVL…RFWKHSTGID (173 aa). Topologically, residues 1–197 are mitochondrial intermembrane; sequence MLRWLRGFVL…ERKSGQWWRQ (197 aa). 4 consecutive EF-hand domains span residues 19–54, 55–88, 86–121, and 122–157; these read EPPTRYETLFQALDRNGDGVVDIRELQEGLKSLGIP, LGQDAEEKIFTTGDVNKDGKLDFEEFMKYLKDHE, DHEKKMKLAFKSLDKNNDGKIEASEIVQSLQTLGLT, and ISEQQAELILQSIDADGTMTVDWNEWRDYFLFNPVA. Positions 32, 34, 36, 38, 43, 68, 70, 72, 74, 79, 99, 101, 103, 105, 110, 135, 137, 139, 141, and 146 each coordinate Ca(2+). The linker region stretch occupies residues 159 to 168; sequence IEEIIRFWKH. The tract at residues 174–475 is C-terminal transmembrane transporter domain; the sequence is IGDSLTIPDE…MKQTLGVTQK (302 aa). 3 Solcar repeats span residues 192–276, 284–369, and 381–469; these read GQWW…YKKL, IGTF…LKSH, and PGVL…MKQT. The chain crosses the membrane as a helical span at residues 198–215; the sequence is LLAGGIAGAVSRTSTAPL. Residues 216–250 lie on the Mitochondrial matrix side of the membrane; that stretch reads DRLKVMMQVHGSKSMNIFGGFRQMIKEGGVRSLWR. The helical transmembrane segment at 251–270 threads the bilayer; sequence GNGTNVIKIAPETAVKFWVY. Over 271 to 293 the chain is Mitochondrial intermembrane; sequence EQYKKLLTEEGQKIGTFERFISG. A helical transmembrane segment spans residues 294–307; that stretch reads SMAGATAQTFIYPM. Residues 308-343 lie on the Mitochondrial matrix side of the membrane; sequence EVMKTRLAVGKTGQYSGIYDCAKKILKYEGFGAFYK. The residue at position 318 (Lys-318) is an N6-acetyllysine; alternate. Lys-318 is subject to N6-succinyllysine; alternate. The residue at position 334 (Lys-334) is an N6-acetyllysine. Residues 344 to 363 traverse the membrane as a helical segment; the sequence is GYVPNLLGIIPYAGIDLAVY. Over 364–386 the chain is Mitochondrial intermembrane; that stretch reads ELLKSHWLDNFAKDSVNPGVLVL. A helical transmembrane segment spans residues 387–404; it reads LGCGALSSTCGQLASYPL. Over 405-443 the chain is Mitochondrial matrix; that stretch reads ALVRTRMQAQAMLEGAPQLNMVGLFRRIISKEGLPGLYR. An N6-acetyllysine; alternate modification is found at Lys-435. At Lys-435 the chain carries N6-succinyllysine; alternate. A helical transmembrane segment spans residues 444–463; the sequence is GITPNFMKVLPAVGISYVVY. The Mitochondrial intermembrane segment spans residues 464 to 475; sequence ENMKQTLGVTQK.

This sequence belongs to the mitochondrial carrier (TC 2.A.29) family. As to quaternary structure, monomer. In terms of tissue distribution, mainly expressed in colon. Also expressed in the small intestine proximal to the ileum. Weakly expressed in kidney but not in the liver.

It is found in the mitochondrion inner membrane. The protein localises to the peroxisome membrane. It catalyses the reaction Mg(2+)(out) + phosphate(in) + ATP(out) = Mg(2+)(in) + phosphate(out) + ATP(in). The enzyme catalyses ADP(out) + phosphate(in) + H(+)(out) = ADP(in) + phosphate(out) + H(+)(in). It carries out the reaction AMP(out) + phosphate(in) = AMP(in) + phosphate(out). The catalysed reaction is phosphate(in) + ATP(out) + 2 H(+)(out) = phosphate(out) + ATP(in) + 2 H(+)(in). It catalyses the reaction dADP(in) + ADP(out) = dADP(out) + ADP(in). The enzyme catalyses Mg(2+)(in) + ADP(out) + ATP(in) + H(+)(out) = Mg(2+)(out) + ADP(in) + ATP(out) + H(+)(in). It carries out the reaction ADP(out) + diphosphate(in) = ADP(in) + diphosphate(out). The catalysed reaction is dAMP(in) + ADP(out) + H(+)(out) = dAMP(out) + ADP(in) + H(+)(in). It catalyses the reaction 3'-AMP(in) + ADP(out) + H(+)(out) = 3'-AMP(out) + ADP(in) + H(+)(in). The enzyme catalyses dAMP(out) + phosphate(in) = dAMP(in) + phosphate(out). It carries out the reaction 3'-AMP(out) + phosphate(in) = 3'-AMP(in) + phosphate(out). The catalysed reaction is dADP(out) + phosphate(in) + H(+)(out) = dADP(in) + phosphate(out) + H(+)(in). With respect to regulation, activated by an increase in cytosolic calcium levels that induce a conformational change of the N-terminal regulatory domain, uncapping the channel and allowing transport. Inhibited by bathophenanthroline, mersalyl, p-hydroxymercuribenzoate, bromcresol purple and tannic acid. Electroneutral antiporter that mediates the transport of adenyl nucleotides through the inner mitochondrial membrane. Originally identified as an ATP-magnesium/inorganic phosphate antiporter, it also acts as a broad specificity adenyl nucleotide antiporter. By regulating the mitochondrial matrix adenyl nucleotide pool could adapt to changing cellular energetic demands and indirectly regulate adenyl nucleotide-dependent metabolic pathways. In vitro, a low activity is also observed with guanyl and pyrimidine nucleotides. May play a role in protecting cells against oxidative stress-induced cell death, by buffering calcium levels in the mitochondrial matrix through the formation of calcium-phosphate precipitates. In Oryctolagus cuniculus (Rabbit), this protein is Mitochondrial adenyl nucleotide antiporter SLC25A24 (SLC25A24).